The following is a 236-amino-acid chain: 2,3,4,5-tetrahydropyridine-2,6-dicarboxylate N-acetyltransferase (236 aa).

It belongs to the transferase hexapeptide repeat family. DapH subfamily.

It catalyses the reaction (S)-2,3,4,5-tetrahydrodipicolinate + acetyl-CoA + H2O = L-2-acetamido-6-oxoheptanedioate + CoA. It functions in the pathway amino-acid biosynthesis; L-lysine biosynthesis via DAP pathway; LL-2,6-diaminopimelate from (S)-tetrahydrodipicolinate (acetylase route): step 1/3. Catalyzes the transfer of an acetyl group from acetyl-CoA to tetrahydrodipicolinate. The chain is 2,3,4,5-tetrahydropyridine-2,6-dicarboxylate N-acetyltransferase from Clostridium botulinum (strain 657 / Type Ba4).